A 205-amino-acid polypeptide reads, in one-letter code: Nuclear transcription factor Y subunit beta (205 aa).

Residues 1–50 (MDGDSSTTDASQLGIAGDYIGGSHYVIQPHDDTEDSMNDHEDTNGSKESF) are a domain. The tract at residues 24-50 (HYVIQPHDDTEDSMNDHEDTNGSKESF) is disordered. Over residues 37-50 (MNDHEDTNGSKESF) the composition is skewed to basic and acidic residues. The tract at residues 51-140 (REQDIYLPIA…PLKLYLQKFR (90 aa)) is b domain. The DNA-binding element occupies 57-63 (LPIANVA). Positions 84–95 (VQECVSEFISFI) are subunit association domain (SAD). The interval 141–201 (EAMKGEKGIG…SYQQISGVQQ (61 aa)) is c domain.

Belongs to the NFYB/HAP3 subunit family. Heterotrimeric transcription factor composed of three components, NF-YA, NF-YB and NF-YC. NF-YB and NF-YC must interact and dimerize for NF-YA association and DNA binding.

It is found in the nucleus. Functionally, component of the sequence-specific heterotrimeric transcription factor (NF-Y) which specifically recognizes a 5'-CCAAT-3' box motif found in the promoters of its target genes. NF-Y can function as both an activator and a repressor, depending on its interacting cofactors. This is Nuclear transcription factor Y subunit beta (NFYB) from Gallus gallus (Chicken).